The chain runs to 432 residues: Adenylosuccinate synthetase (432 aa).

GTP contacts are provided by residues 13 to 19 and 41 to 43; these read GDEGKGK and GHT. Asp14 acts as the Proton acceptor in catalysis. Residues Asp14 and Gly41 each coordinate Mg(2+). IMP is bound by residues 14–17, 39–42, Thr130, Arg144, Gln225, Thr240, and Arg304; these read DEGK and NAGH. Catalysis depends on His42, which acts as the Proton donor. Residue 300–306 coordinates substrate; the sequence is ATTGRRR. Residues Arg306, 332 to 334, and 415 to 417 each bind GTP; these read KLD and STG.

Belongs to the adenylosuccinate synthetase family. As to quaternary structure, homodimer. Mg(2+) serves as cofactor.

It localises to the cytoplasm. It carries out the reaction IMP + L-aspartate + GTP = N(6)-(1,2-dicarboxyethyl)-AMP + GDP + phosphate + 2 H(+). It functions in the pathway purine metabolism; AMP biosynthesis via de novo pathway; AMP from IMP: step 1/2. Its function is as follows. Plays an important role in the de novo pathway of purine nucleotide biosynthesis. Catalyzes the first committed step in the biosynthesis of AMP from IMP. In Salmonella arizonae (strain ATCC BAA-731 / CDC346-86 / RSK2980), this protein is Adenylosuccinate synthetase.